The primary structure comprises 196 residues: Gastrula zinc finger protein XlCGF64.1 (196 aa).

C2H2-type zinc fingers lie at residues 6-28, 34-56, 62-84, 90-112, 118-140, 146-168, and 174-196; these read YECP…QRGH, FMCT…QFIH, YVCT…QRGH, FTCT…QFIH, YECT…QRGH, and LMCT…KLSH.

This sequence belongs to the krueppel C2H2-type zinc-finger protein family.

It localises to the nucleus. May be involved in transcriptional regulation. In Xenopus laevis (African clawed frog), this protein is Gastrula zinc finger protein XlCGF64.1.